The sequence spans 226 residues: ATP synthase F(0) complex subunit a (226 aa).

The next 6 membrane-spanning stretches (helical) occupy residues 5–25 (LFASFIAPTILGLPAAVLIIL), 68–88 (WSLMLMWLIIFIATTNLLGLL), 97–117 (QLSMNLAMAIPLWAGAVTTGF), 138–158 (IPMLVIIETISLFIQPMALAV), 160–180 (LTANITAGHLLMHLIGSATLA), and 189–209 (TLIIFTVLILLTMLEIAVALI).

The protein belongs to the ATPase A chain family. As to quaternary structure, component of the ATP synthase complex composed at least of ATP5F1A/subunit alpha, ATP5F1B/subunit beta, ATP5MC1/subunit c (homooctomer), MT-ATP6/subunit a, MT-ATP8/subunit 8, ATP5ME/subunit e, ATP5MF/subunit f, ATP5MG/subunit g, ATP5MK/subunit k, ATP5MJ/subunit j, ATP5F1C/subunit gamma, ATP5F1D/subunit delta, ATP5F1E/subunit epsilon, ATP5PF/subunit F6, ATP5PB/subunit b, ATP5PD/subunit d, ATP5PO/subunit OSCP. ATP synthase complex consists of a soluble F(1) head domain (subunits alpha(3) and beta(3)) - the catalytic core - and a membrane F(0) domain - the membrane proton channel (subunits c, a, 8, e, f, g, k and j). These two domains are linked by a central stalk (subunits gamma, delta, and epsilon) rotating inside the F1 region and a stationary peripheral stalk (subunits F6, b, d, and OSCP). Interacts with DNAJC30; interaction is direct.

It localises to the mitochondrion inner membrane. The catalysed reaction is H(+)(in) = H(+)(out). Functionally, subunit a, of the mitochondrial membrane ATP synthase complex (F(1)F(0) ATP synthase or Complex V) that produces ATP from ADP in the presence of a proton gradient across the membrane which is generated by electron transport complexes of the respiratory chain. ATP synthase complex consist of a soluble F(1) head domain - the catalytic core - and a membrane F(1) domain - the membrane proton channel. These two domains are linked by a central stalk rotating inside the F(1) region and a stationary peripheral stalk. During catalysis, ATP synthesis in the catalytic domain of F(1) is coupled via a rotary mechanism of the central stalk subunits to proton translocation. With the subunit c (ATP5MC1), forms the proton-conducting channel in the F(0) domain, that contains two crucial half-channels (inlet and outlet) that facilitate proton movement from the mitochondrial intermembrane space (IMS) into the matrix. Protons are taken up via the inlet half-channel and released through the outlet half-channel, following a Grotthuss mechanism. In Gorilla gorilla gorilla (Western lowland gorilla), this protein is ATP synthase F(0) complex subunit a.